The primary structure comprises 466 residues: Transcription factor eupR (466 aa).

A compositionally biased stretch (polar residues) spans 1-18; it reads MFSTEPRSDTAPGSPSCS. The interval 1–22 is disordered; it reads MFSTEPRSDTAPGSPSCSETKR. Positions 32-62 form a DNA-binding region, zn(2)-C6 fungal-type; it reads CWECKRRKVKCSYSNPSDPRCIGCRRRGTKC.

Its subcellular location is the nucleus. In terms of biological role, transcription factor; part of the gene cluster that mediates the biosynthesis of eupenifeldin, a bistropolone meroterpenoid that acts as an antitumor agent. The polypeptide is Transcription factor eupR (Phoma sp).